We begin with the raw amino-acid sequence, 507 residues long: MENDPFLRQYQPSELKIASEFLTNWLPFLSKDLCKDCNHLLSNRIRSLDPAHCSNNTDKVDGECKTGSCSVVENMGSERASNNVDDNYDEKSENGEDCDNHSLGSWKGSEIVFGSFPEDFSSVLQSRPAVVETASPRMRWADMAQEDEFDEEEEEEEEERDSSRKGFDASSMKTPEKPKLSRDQRENLRLINVKRKKDFICLERVKGKIVNVLDGLELHTGVFSAVEQKRIVDQVYQLQEKGRRGELKKRTFTAPHKWMRGKGRETIQFGCCYNYAPDRAGNPPGILQREEVDPLPHLFKVIIRKLIKWHVLPPTCVPDSCIVNIYDEGDCIPPHIDNHDFLRPFCTISFLSECDILFGSNLKVEGPGDFSGSYSIPLPVGSVLVLNGNGADVAKHCVPAVPTKRISITFRKMDESKRPVWFTPEPDLQGIEPLPLDLNRSGSTSRFSRLNNHNGTNQRGHGRRGGGNGYDSRGYYNPERSSEHNDSGDWPSSQRRGMPRPSRRNYG.

Disordered stretches follow at residues 76 to 102 (GSERASNNVDDNYDEKSENGEDCDNHS) and 145 to 183 (QEDEFDEEEEEEEEERDSSRKGFDASSMKTPEKPKLSRD). Over residues 89-100 (DEKSENGEDCDN) the composition is skewed to basic and acidic residues. The segment covering 145 to 160 (QEDEFDEEEEEEEEER) has biased composition (acidic residues). A compositionally biased stretch (basic and acidic residues) spans 174-183 (TPEKPKLSRD). The region spanning 317 to 414 (VPDSCIVNIY…RISITFRKMD (98 aa)) is the Fe2OG dioxygenase domain. 3 residues coordinate Fe cation: His335, Asp337, and His396. Residue Arg405 participates in 2-oxoglutarate binding. Residues 432 to 507 (EPLPLDLNRS…MPRPSRRNYG (76 aa)) are disordered. Polar residues predominate over residues 440–450 (RSGSTSRFSRL). Basic residues predominate over residues 497–507 (GMPRPSRRNYG).

This sequence belongs to the alkB family. In terms of assembly, (Microbial infection) Interacts with the capsid protein ORF3b of the alfalfa mosaic virus (AMV). The cofactor is Fe(2+).

The protein localises to the cytoplasm. It localises to the P-body. Its subcellular location is the cytoplasmic granule. It carries out the reaction an N(6)-methyladenosine in mRNA + 2-oxoglutarate + O2 = an adenosine in mRNA + formaldehyde + succinate + CO2. In terms of biological role, dioxygenase that demethylates RNA by oxidative demethylation: specifically demethylates N(6)-methyladenosine (m6A) RNA, the most prevalent internal modification of messenger RNA (mRNA) in higher eukaryotes. Modulates viral infection of the alfalfa mosaic virus (AMV) and the m6A abundance in its genomic RNAs. This Arabidopsis thaliana (Mouse-ear cress) protein is RNA demethylase ALKBH9B.